The primary structure comprises 314 residues: Thymidylate synthase (314 aa).

DUMP contacts are provided by residues arginine 21 and 176 to 177 (RR). Catalysis depends on cysteine 196, which acts as the Nucleophile. DUMP contacts are provided by residues 216–219 (RSAD), asparagine 227, and 257–259 (HLY). Aspartate 219 provides a ligand contact to (6R)-5,10-methylene-5,6,7,8-tetrahydrofolate. Serine 313 contacts (6R)-5,10-methylene-5,6,7,8-tetrahydrofolate.

This sequence belongs to the thymidylate synthase family. Bacterial-type ThyA subfamily. As to quaternary structure, homodimer.

It localises to the cytoplasm. It catalyses the reaction dUMP + (6R)-5,10-methylene-5,6,7,8-tetrahydrofolate = 7,8-dihydrofolate + dTMP. Its pathway is pyrimidine metabolism; dTTP biosynthesis. Its function is as follows. Catalyzes the reductive methylation of 2'-deoxyuridine-5'-monophosphate (dUMP) to 2'-deoxythymidine-5'-monophosphate (dTMP) while utilizing 5,10-methylenetetrahydrofolate (mTHF) as the methyl donor and reductant in the reaction, yielding dihydrofolate (DHF) as a by-product. This enzymatic reaction provides an intracellular de novo source of dTMP, an essential precursor for DNA biosynthesis. This Listeria monocytogenes serotype 4a (strain HCC23) protein is Thymidylate synthase.